The primary structure comprises 321 residues: Cysteine and histidine-rich domain-containing protein 1 (321 aa).

Zn(2+)-binding residues include Cys9, Cys14, Cys28, His31, Cys46, Cys47, Cys63, His68, Cys152, Cys157, Cys170, His173, Cys188, Cys189, Cys205, and His210. CHORD domains follow at residues 9 to 68 (CYHK…RGKH) and 152 to 210 (CRNN…SGEH). The CS domain maps to 218–308 (VSKFREDWFS…KHGTGWPRLK (91 aa)).

Its function is as follows. Regulates centrosome duplication. Controls the secretion of the tyrosine kinase receptor let-23/EGFR from the endoplasmic reticulum and is required for the localization of let-23/EGFR to the plasma membrane of vulval precursor cells. It thus plays a role in positively regulating let/EGFR signaling, and anchor cell and vulval precursor cell alignment. Plays a role in vulval development and morphogenesis. This Caenorhabditis elegans protein is Cysteine and histidine-rich domain-containing protein 1.